Reading from the N-terminus, the 327-residue chain is MASSVPGPIDLPESRYDLSTYWGRIRHCAEISDPTMLLTTEKDLAHAREIISAYRHGELKETTPEFWRAKKQLDSTVHPDTGKTVLLPFRMSSNVLSNLVVTVGMLTPGLGTAGTVFWQWANQSLNVAVNSANANKSHPMSTSQLLTNYAAAVTASCGVALGLNNLVPRLKNISPHSKLILGRLVPFAAVVSAGIVNVFLMRGNEIRKGISVFDSNGDEVGKSKKAAFMAVGETALSRVINATPTMVIPPLILVRLQRGVLKGKSLGVQTLANLGLISVTMFSALPFALGIFPQRQAIHLNKLEPELHGKKDKDGKPIEKVYFNRGI.

Residue Ala-2 is modified to N-acetylalanine. 4 helical membrane-spanning segments follow: residues 98-118 (NLVV…TVFW), 143-163 (SQLL…ALGL), 179-199 (LILG…VNVF), and 272-292 (ANLG…LGIF).

This sequence belongs to the sideroflexin family.

The protein localises to the mitochondrion membrane. Its function is as follows. Mitochondrial amino-acid transporter that mediates transport of serine into mitochondria. This chain is Sideroflexin FSF1, found in Saccharomyces cerevisiae (strain ATCC 204508 / S288c) (Baker's yeast).